The chain runs to 478 residues: tRNA-2-methylthio-N(6)-dimethylallyladenosine synthase (478 aa).

An MTTase N-terminal domain is found at 39–157 (KLVFTQTFGC…FPQLLTESIN (119 aa)). The [4Fe-4S] cluster site is built by Cys48, Cys84, Cys118, Cys194, Cys198, and Cys201. In terms of domain architecture, Radical SAM core spans 180 to 410 (RKFELKAFVN…LEAVNRISAE (231 aa)). The TRAM domain maps to 410–477 (EINDGYKDRI…TFSLNGILVN (68 aa)).

It belongs to the methylthiotransferase family. MiaB subfamily. As to quaternary structure, monomer. The cofactor is [4Fe-4S] cluster.

The protein resides in the cytoplasm. It catalyses the reaction N(6)-dimethylallyladenosine(37) in tRNA + (sulfur carrier)-SH + AH2 + 2 S-adenosyl-L-methionine = 2-methylsulfanyl-N(6)-dimethylallyladenosine(37) in tRNA + (sulfur carrier)-H + 5'-deoxyadenosine + L-methionine + A + S-adenosyl-L-homocysteine + 2 H(+). Catalyzes the methylthiolation of N6-(dimethylallyl)adenosine (i(6)A), leading to the formation of 2-methylthio-N6-(dimethylallyl)adenosine (ms(2)i(6)A) at position 37 in tRNAs that read codons beginning with uridine. The sequence is that of tRNA-2-methylthio-N(6)-dimethylallyladenosine synthase from Clostridioides difficile (strain 630) (Peptoclostridium difficile).